The chain runs to 364 residues: Methylthioribose-1-phosphate isomerase (364 aa).

Substrate is bound by residues 46–48 (RGA), arginine 89, and glutamine 196. Aspartate 237 acts as the Proton donor in catalysis. 247–248 (NK) is a substrate binding site.

Belongs to the eIF-2B alpha/beta/delta subunits family. MtnA subfamily.

The enzyme catalyses 5-(methylsulfanyl)-alpha-D-ribose 1-phosphate = 5-(methylsulfanyl)-D-ribulose 1-phosphate. The protein operates within amino-acid biosynthesis; L-methionine biosynthesis via salvage pathway; L-methionine from S-methyl-5-thio-alpha-D-ribose 1-phosphate: step 1/6. Catalyzes the interconversion of methylthioribose-1-phosphate (MTR-1-P) into methylthioribulose-1-phosphate (MTRu-1-P). The sequence is that of Methylthioribose-1-phosphate isomerase from Pelotomaculum thermopropionicum (strain DSM 13744 / JCM 10971 / SI).